A 708-amino-acid polypeptide reads, in one-letter code: O-antigen chain terminator bifunctional methyltransferase/kinase WbdD (708 aa).

A methyltransferase region spans residues 1–210; the sequence is MTKDLNTLVS…VPRPMYLVSN (210 aa). Residues 16–17, Arg36, Gly61, 82–87, 108–111, and Leu128 contribute to the S-adenosyl-L-methionine site; these read YQ, DFQQEN, and GRIE. The interval 211–459 is kinase; the sequence is HRVLINDFNQ…AKLPSAEQQR (249 aa). ATP contacts are provided by residues Pro229, His237, 241–243, Lys252, Glu274, 309–311, Met358, and Asp369; these read RRY and EKL. Residues 485–594 adopt a coiled-coil conformation; the sequence is AGSEALRGQI…EIEKIHRSRS (110 aa). The required for membrane-binding stretch occupies residues 601-669; it reads YRYLGLQIHL…RLYRRMNPLP (69 aa). The required for localizing WbdA to the membrane stretch occupies residues 687–708; the sequence is VMHPELLPPEVYEIYLKLTKNK.

Belongs to the WbdD family. As to quaternary structure, homotrimer in solution. Interacts with WbdA.

It is found in the cell inner membrane. The catalysed reaction is 3-O-phospho-alpha-D-Man-(1-&gt;2)-alpha-D-Man-(1-&gt;2)-[alpha-D-Man-(1-&gt;3)-alpha-D-Man-(1-&gt;3)-alpha-D-Man-(1-&gt;2)-alpha-D-Man-(1-&gt;2)](n)-alpha-D-Man-(1-&gt;3)-alpha-D-Man-(1-&gt;3)-alpha-D-Man-(1-&gt;3)-alpha-D-GlcNAc-di-trans,octa-cis-undecaprenyl diphosphate + S-adenosyl-L-methionine = 3-O-methylphospho-alpha-D-Man-(1-&gt;2)-alpha-D-Man-(1-&gt;2)-[alpha-D-Man-(1-&gt;3)-alpha-D-Man-(1-&gt;3)-alpha-D-Man-(1-&gt;2)-alpha-D-Man-(1-&gt;2)](n)-alpha-D-Man-(1-&gt;3)-alpha-D-Man-(1-&gt;3)-alpha-D-Man-(1-&gt;3)-alpha-D-GlcNAc-di-trans,octa-cis-undecaprenyl diphosphate + S-adenosyl-L-homocysteine. The enzyme catalyses alpha-D-Man-(1-&gt;2)-alpha-D-Man-(1-&gt;2)-[alpha-D-Man-(1-&gt;3)-alpha-D-Man-(1-&gt;3)-alpha-D-Man-(1-&gt;2)-alpha-D-Man-(1-&gt;2)](n)-alpha-D-Man-(1-&gt;3)-alpha-D-Man-(1-&gt;3)-alpha-D-Man-(1-&gt;3)-alpha-D-GlcNAc-di-trans,octa-cis-undecaprenyl diphosphate + ATP = 3-O-phospho-alpha-D-Man-(1-&gt;2)-alpha-D-Man-(1-&gt;2)-[alpha-D-Man-(1-&gt;3)-alpha-D-Man-(1-&gt;3)-alpha-D-Man-(1-&gt;2)-alpha-D-Man-(1-&gt;2)](n)-alpha-D-Man-(1-&gt;3)-alpha-D-Man-(1-&gt;3)-alpha-D-Man-(1-&gt;3)-alpha-D-GlcNAc-di-trans,octa-cis-undecaprenyl diphosphate + ADP + H(+). It functions in the pathway bacterial outer membrane biogenesis; LPS O-antigen biosynthesis. Regulates the length of the LPS O-antigen polysaccharide chain. Stops the polymerization of the chain by phosphorylating and then methylating the phosphate on the terminal sugar. This terminal modification is essential for export of the O-antigen across the inner membrane. WbdD is also required for correct localization of the WbdA mannosyltransferase. This Escherichia coli protein is O-antigen chain terminator bifunctional methyltransferase/kinase WbdD.